A 448-amino-acid polypeptide reads, in one-letter code: Tubulin beta-2 chain (448 aa).

Glutamine 11, glutamate 69, serine 138, glycine 142, threonine 143, glycine 144, asparagine 204, and asparagine 226 together coordinate GTP. Residue glutamate 69 coordinates Mg(2+). The interval 429–448 (TADEDGYEYEDEEEVGEEDA) is disordered.

Belongs to the tubulin family. As to quaternary structure, dimer of alpha and beta chains. A typical microtubule is a hollow water-filled tube with an outer diameter of 25 nm and an inner diameter of 15 nM. Alpha-beta heterodimers associate head-to-tail to form protofilaments running lengthwise along the microtubule wall with the beta-tubulin subunit facing the microtubule plus end conferring a structural polarity. Microtubules usually have 13 protofilaments but different protofilament numbers can be found in some organisms and specialized cells. The cofactor is Mg(2+).

The protein resides in the cytoplasm. Its subcellular location is the cytoskeleton. Tubulin is the major constituent of microtubules, a cylinder consisting of laterally associated linear protofilaments composed of alpha- and beta-tubulin heterodimers. Microtubules grow by the addition of GTP-tubulin dimers to the microtubule end, where a stabilizing cap forms. Below the cap, tubulin dimers are in GDP-bound state, owing to GTPase activity of alpha-tubulin. This is Tubulin beta-2 chain (TUBB2) from Lupinus albus (White lupine).